The sequence spans 102 residues: MNAIPLEHGLAVAGVLFCLGLVGLMVRRNILFVLMSLEIMMNAAALAFVVAGSRWGQPDGQVMFILVISLAAAEASIGLAILMQLYRRFHTLDIDAASEMRG.

3 helical membrane passes run 6–26 (LEHG…GLMV), 30–50 (ILFV…AFVV), and 62–82 (VMFI…LAIL).

The protein belongs to the complex I subunit 4L family. In terms of assembly, NDH-1 is composed of 13 different subunits. Subunits NuoA, H, J, K, L, M, N constitute the membrane sector of the complex.

Its subcellular location is the cell inner membrane. The enzyme catalyses a quinone + NADH + 5 H(+)(in) = a quinol + NAD(+) + 4 H(+)(out). In terms of biological role, NDH-1 shuttles electrons from NADH, via FMN and iron-sulfur (Fe-S) centers, to quinones in the respiratory chain. The immediate electron acceptor for the enzyme in this species is believed to be ubiquinone. Couples the redox reaction to proton translocation (for every two electrons transferred, four hydrogen ions are translocated across the cytoplasmic membrane), and thus conserves the redox energy in a proton gradient. The sequence is that of NADH-quinone oxidoreductase subunit K from Pseudomonas syringae pv. syringae (strain B728a).